Here is a 927-residue protein sequence, read N- to C-terminus: Band 3 anion transport protein (927 aa).

Methionine 1 is subject to N-acetylmethionine. The Cytoplasmic portion of the chain corresponds to methionine 1–proline 420. Serine 18 bears the Phosphoserine mark. Tyrosine 31 and tyrosine 56 each carry phosphotyrosine. The globular stretch occupies residues serine 69–threonine 303. The interval alanine 190 to serine 199 is interaction with ANK1. A phosphoserine mark is found at serine 199 and serine 222. Residues arginine 317–asparagine 370 form a dimerization arm region. Positions proline 367–arginine 390 are disordered. Tyrosine 372 is subject to Phosphotyrosine. The helical transmembrane segment at glutamine 421–leucine 444 threads the bilayer. Residues glycine 445–methionine 452 lie on the Extracellular side of the membrane. Residues glycine 453–alanine 473 form a helical membrane-spanning segment. Residues glutamine 474–leucine 476 lie on the Cytoplasmic side of the membrane. A discontinuously helical membrane pass occupies residues leucine 477–tyrosine 493. The Extracellular segment spans residues serine 494–glutamate 502. The helical transmembrane segment at tyrosine 503–alanine 523 threads the bilayer. The Cytoplasmic portion of the chain corresponds to phenylalanine 524–arginine 535. A helical transmembrane segment spans residues tyrosine 536–isoleucine 558. The Extracellular segment spans residues lysine 559–threonine 586. The chain crosses the membrane as a helical span at residues alanine 587–phenylalanine 607. Topologically, residues lysine 608–arginine 618 are cytoplasmic. The helical transmembrane segment at arginine 619–phenylalanine 639 threads the bilayer. Topologically, residues isoleucine 640–methionine 679 are extracellular. A glycan (N-linked (GlcNAc...) asparagine) is linked at asparagine 658. Residues methionine 680–isoleucine 700 traverse the membrane as a helical segment. Residues threonine 701–serine 716 are Cytoplasmic-facing. The helical transmembrane segment at glycine 717–phenylalanine 735 threads the bilayer. A discontinuously helical transmembrane segment spans residues glycine 736–alanine 753. Residues leucine 754–arginine 776 are Cytoplasmic-facing. The next 2 membrane-spanning stretches (helical) occupy residues isoleucine 777–serine 797 and arginine 798–leucine 816. At serine 817–glycine 854 the chain is on the cytoplasmic side. An intramembrane region (discontinuously helical) is located at residues isoleucine 855–leucine 885. Cysteine 859 carries the S-palmitoyl cysteine lipid modification. Topologically, residues arginine 886–valine 927 are cytoplasmic. A Phosphotyrosine modification is found at tyrosine 920.

It belongs to the anion exchanger (TC 2.A.31) family. In terms of assembly, a dimer in solution, but in its membrane environment, it exists primarily as a mixture of dimers and tetramers and spans the membrane asymmetrically. Component of the ankyrin-1 complex in the erythrocyte, composed of ANK1, RHCE, RHAG, SLC4A1, EPB42, GYPA, GYPB and AQP1. Interacts with STOM; this interaction positively regulates SLC4A1 activity. Interacts with GYPA; a GYPA monomer is bound at each end of the SLC4A1 dimer forming a heterotetramer. Three SLC4A1 dimers (Band 3-I, Band 3-II and Band 3-III) participates in the ankyrin-1 complex. Interacts (via the cytoplasmic domain) with EPB42; this interaction is mediated by the SLC4A1 Band 3-I dimer. Interacts (via the cytoplasmic domain) directly with ANK1; this interaction is mediated by the SLC4A1 Band 3-II and Band 3-III dimers. As to quaternary structure, interacts with TMEM139. As to expression, kidney.

The protein resides in the cell membrane. It is found in the basolateral cell membrane. It catalyses the reaction hydrogencarbonate(in) + chloride(out) = hydrogencarbonate(out) + chloride(in). Functions both as a transporter that mediates electroneutral anion exchange across the cell membrane and as a structural protein. Component of the ankyrin-1 complex of the erythrocyte membrane; required for normal flexibility and stability of the erythrocyte membrane and for normal erythrocyte shape via the interactions of its cytoplasmic domain with cytoskeletal proteins, glycolytic enzymes, and hemoglobin. Functions as a transporter that mediates the 1:1 exchange of inorganic anions across the erythrocyte membrane. Mediates chloride-bicarbonate exchange in the kidney, and is required for normal acidification of the urine. This is Band 3 anion transport protein from Rattus norvegicus (Rat).